The chain runs to 479 residues: Glucan 1,3-beta-glucosidase 2 (479 aa).

Residues 1–21 form the signal peptide; the sequence is MMLFLIHLMALCCMFVAEVAC. 6 N-linked (GlcNAc...) asparagine glycosylation sites follow: N25, N29, N63, N104, N187, and N193. E227 functions as the Proton donor in the catalytic mechanism. N-linked (GlcNAc...) asparagine glycosylation is found at N254, N285, and N288. H306 acts as the Nucleophile in catalysis. Residues N318 and N451 are each glycosylated (N-linked (GlcNAc...) asparagine). A lipid anchor (GPI-anchor amidated serine) is attached at S456. Positions 457–479 are cleaved as a propeptide — removed in mature form; the sequence is SASAIASNKMTLLLAFLLVILVI.

It belongs to the glycosyl hydrolase 5 (cellulase A) family. Post-translationally, predicted to be a substrate for cleavage by KEX2.

Its subcellular location is the cell membrane. It localises to the secreted. The enzyme catalyses Successive hydrolysis of beta-D-glucose units from the non-reducing ends of (1-&gt;3)-beta-D-glucans, releasing alpha-glucose.. Functionally, beta-glucanases participate in the metabolism of beta-glucan, the main structural component of the cell wall. EXG2 is not heavily involved in the exoglucanase function of the adhesion process. This is Glucan 1,3-beta-glucosidase 2 (EXG2) from Candida albicans (strain SC5314 / ATCC MYA-2876) (Yeast).